The chain runs to 801 residues: Putative mRNA-capping enzyme P5 (801 aa).

The protein belongs to the phytoreovirus protein P5 family.

It is found in the virion. The protein localises to the host cytoplasm. The catalysed reaction is a 5'-end diphospho-ribonucleoside in mRNA + GTP + H(+) = a 5'-end (5'-triphosphoguanosine)-ribonucleoside in mRNA + diphosphate. The protein operates within mRNA processing; mRNA capping. Functionally, enzyme involved in mRNA capping (Potential). Binds to GTP and might have guanylyltransferase activity. Together with the RNA-directed RNA polymerase P1 and protein P7, forms an transcriptional complex positioned near the channels situated at each of the five-fold vertices of the core. The sequence is that of Putative mRNA-capping enzyme P5 from Alopecurus aequalis (Barnyard grass).